The sequence spans 559 residues: Chaperonin GroEL 3 (559 aa).

ATP contacts are provided by residues 88-92 (DGTTT), Gly426, and Asp507.

It belongs to the chaperonin (HSP60) family. Forms a cylinder of 14 subunits composed of two heptameric rings stacked back-to-back. Interacts with the co-chaperonin GroES.

The protein resides in the cytoplasm. The catalysed reaction is ATP + H2O + a folded polypeptide = ADP + phosphate + an unfolded polypeptide.. Functionally, together with its co-chaperonin GroES, plays an essential role in assisting protein folding. The GroEL-GroES system forms a nano-cage that allows encapsulation of the non-native substrate proteins and provides a physical environment optimized to promote and accelerate protein folding. This chain is Chaperonin GroEL 3, found in Methylococcus capsulatus (strain ATCC 33009 / NCIMB 11132 / Bath).